Consider the following 682-residue polypeptide: Polycomb protein suz12-B (682 aa).

Residues 326–355 (DPSDPSTAPVAKPLSTRNSDTSTTESRIST) are disordered. Residues 340–354 (STRNSDTSTTESRIS) are compositionally biased toward polar residues. A C2H2-type zinc finger spans residues 408-431 (LHCPWCTLNCRKLYSLLKHLKLSH). The tract at residues 523–599 (RLYFHSDSCM…NQMSQASMLF (77 aa)) is VEFS-box.

It belongs to the VEFS (VRN2-EMF2-FIS2-SU(Z)12) family. As to quaternary structure, component of the prc2/eed-ezh2 complex.

The protein localises to the nucleus. Polycomb group (PcG) protein. Component of the prc2/eed-ezh2 complex, which methylates 'Lys-9' and 'Lys-27' of histone H3, leading to transcriptional repression of the affected target gene. The protein is Polycomb protein suz12-B (suz12b) of Danio rerio (Zebrafish).